The chain runs to 323 residues: Tyrosine--tRNA ligase (323 aa).

An L-tyrosine-binding site is contributed by Y36. Positions 41–49 (PSGEIHLGH) match the 'HIGH' region motif. L-tyrosine-binding residues include Y158, Q162, D165, and Q180. The short motif at 214–218 (KMSSS) is the 'KMSKS' region element. Residue S217 coordinates ATP.

This sequence belongs to the class-I aminoacyl-tRNA synthetase family. TyrS type 3 subfamily. As to quaternary structure, homodimer.

It localises to the cytoplasm. It carries out the reaction tRNA(Tyr) + L-tyrosine + ATP = L-tyrosyl-tRNA(Tyr) + AMP + diphosphate + H(+). Catalyzes the attachment of tyrosine to tRNA(Tyr) in a two-step reaction: tyrosine is first activated by ATP to form Tyr-AMP and then transferred to the acceptor end of tRNA(Tyr). The sequence is that of Tyrosine--tRNA ligase from Archaeoglobus fulgidus (strain ATCC 49558 / DSM 4304 / JCM 9628 / NBRC 100126 / VC-16).